The primary structure comprises 200 residues: 3-isopropylmalate dehydratase small subunit (200 aa).

The protein belongs to the LeuD family. LeuD type 1 subfamily. As to quaternary structure, heterodimer of LeuC and LeuD.

The enzyme catalyses (2R,3S)-3-isopropylmalate = (2S)-2-isopropylmalate. Its pathway is amino-acid biosynthesis; L-leucine biosynthesis; L-leucine from 3-methyl-2-oxobutanoate: step 2/4. Catalyzes the isomerization between 2-isopropylmalate and 3-isopropylmalate, via the formation of 2-isopropylmaleate. The protein is 3-isopropylmalate dehydratase small subunit of Yersinia pestis bv. Antiqua (strain Antiqua).